Consider the following 250-residue polypeptide: Bis(5'-nucleosyl)-tetraphosphatase PrpE [asymmetrical] (250 aa).

This sequence belongs to the PrpE family. It depends on Ni(2+) as a cofactor.

The enzyme catalyses P(1),P(4)-bis(5'-guanosyl) tetraphosphate + H2O = GMP + GTP + 2 H(+). Its function is as follows. Asymmetrically hydrolyzes Ap4p to yield AMP and ATP. The protein is Bis(5'-nucleosyl)-tetraphosphatase PrpE [asymmetrical] of Oceanobacillus iheyensis (strain DSM 14371 / CIP 107618 / JCM 11309 / KCTC 3954 / HTE831).